The following is a 377-amino-acid chain: Chaperone protein DnaJ (377 aa).

The region spanning 4–69 is the J domain; sequence DYYEALGVTR…QKRAAYDRFG (66 aa). Residues 135-213 form a CR-type zinc finger; the sequence is GKTAQIRVPT…CHGQGRVTQE (79 aa). Zn(2+) is bound by residues C148, C151, C165, C168, C187, C190, C201, and C204. CXXCXGXG motif repeat units lie at residues 148–155, 165–172, 187–194, and 201–208; these read CDECSGSG, CTMCSGSG, CPGCNGRG, and CEKCHGQG.

It belongs to the DnaJ family. In terms of assembly, homodimer. Zn(2+) serves as cofactor.

Its subcellular location is the cytoplasm. In terms of biological role, participates actively in the response to hyperosmotic and heat shock by preventing the aggregation of stress-denatured proteins and by disaggregating proteins, also in an autonomous, DnaK-independent fashion. Unfolded proteins bind initially to DnaJ; upon interaction with the DnaJ-bound protein, DnaK hydrolyzes its bound ATP, resulting in the formation of a stable complex. GrpE releases ADP from DnaK; ATP binding to DnaK triggers the release of the substrate protein, thus completing the reaction cycle. Several rounds of ATP-dependent interactions between DnaJ, DnaK and GrpE are required for fully efficient folding. Also involved, together with DnaK and GrpE, in the DNA replication of plasmids through activation of initiation proteins. This is Chaperone protein DnaJ from Brucella ovis (strain ATCC 25840 / 63/290 / NCTC 10512).